The chain runs to 132 residues: Pro-MCH 1 (132 aa).

The first 24 residues, 1-24 (MRDSVLSVIFALALFLECYTPSMA), serve as a signal peptide directing secretion. Cys120 and Cys129 are joined by a disulfide.

This sequence belongs to the MCH family. As to expression, pituitary gland. Produced in neurons of lateral basal hypothalamus which project both to the brain and to the neural lobe of the pituitary gland from where MCH is released.

Plays a role in skin pigmentation by antagonizing the action of melanotropin alpha. Induces melanin concentration within the melanophores. May participate in the control of the hypothalamo-pituitary adrenal gland axis by inhibiting the release of ACTH. This is Pro-MCH 1 (mch1) from Oncorhynchus kisutch (Coho salmon).